The following is a 330-amino-acid chain: D-lactate dehydrogenase (330 aa).

Residues 156–157, Asp-176, 206–207, 233–235, and Asp-259 contribute to the NAD(+) site; these read RI, VP, and AAR. Arg-235 is an active-site residue. Residue Glu-264 is part of the active site. The Proton donor role is filled by His-296.

The protein belongs to the D-isomer specific 2-hydroxyacid dehydrogenase family.

The catalysed reaction is (R)-lactate + NAD(+) = pyruvate + NADH + H(+). The chain is D-lactate dehydrogenase (ldhD) from Staphylococcus aureus (strain MRSA252).